The primary structure comprises 311 residues: Protease HtpX homolog 1 (311 aa).

Helical transmembrane passes span 12–32 (VISLGLTIISEGIVLIGIASL) and 35–55 (ISLFFIFPALVIFWLFQWIIS). Histidine 137 is a binding site for Zn(2+). Glutamate 138 is an active-site residue. Histidine 141 provides a ligand contact to Zn(2+). The next 2 membrane-spanning stretches (helical) occupy residues 159 to 179 (VLGYISTLLMNFGYLALFLAA) and 184 to 204 (LLFAIAALAIGFVIFVVTFIL). Zn(2+) is bound at residue glutamate 216.

The protein belongs to the peptidase M48B family. Requires Zn(2+) as cofactor.

The protein localises to the cell membrane. This chain is Protease HtpX homolog 1, found in Saccharolobus solfataricus (strain ATCC 35092 / DSM 1617 / JCM 11322 / P2) (Sulfolobus solfataricus).